The sequence spans 169 residues: Disulfide bond formation protein B 1 (169 aa).

Residues 1–14 are Cytoplasmic-facing; that stretch reads MSDDRLGLGRERRF. The chain crosses the membrane as a helical span at residues 15–31; that stretch reads LVLLGIICLALIGGALY. Over 32–49 the chain is Periplasmic; the sequence is MQVVLGEAPCPLCILQRY. Cysteine 41 and cysteine 44 are oxidised to a cystine. The chain crosses the membrane as a helical span at residues 50–64; it reads ALLLIALFAFIGAAM. Residues 65–71 are Cytoplasmic-facing; that stretch reads SSRRGVT. The helical transmembrane segment at 72–89 threads the bilayer; the sequence is VMETLVVICALAGAGVAG. Residues 90-144 are Periplasmic-facing; the sequence is HHVYTQFYPSVSCGIDVLQPIVDSLPLAKIFPLGFQVDGFCSTPYPPILGLSLAQ. Cysteine 102 and cysteine 130 are disulfide-bonded. The helical transmembrane segment at 145-163 threads the bilayer; it reads WALVAFVLTVILVPLGVVR. The Cytoplasmic segment spans residues 164 to 169; the sequence is NRKKTY.

The protein belongs to the DsbB family.

The protein resides in the cell inner membrane. In terms of biological role, required for disulfide bond formation in some periplasmic proteins. Acts by oxidizing the DsbA protein. The chain is Disulfide bond formation protein B 1 from Pseudomonas fluorescens (strain ATCC BAA-477 / NRRL B-23932 / Pf-5).